A 345-amino-acid chain; its full sequence is MSKQSLSYKDAGVDINAGNTLVERIKSDVKRTTRPEVIGGLGGFGALCALPSKYKDPILVSGTDGVGTKLRLAIDLKKHDTIGVDLVAMCVNDLVVQGAEPLFFLDYYATGKLDVDVAADVIKGIADGCVQAGCALVGGETAEMPGMYHTGDYDLAGFCVGVVEKSEIIDGSNVKAGDALLALASSGPHSNGYSLIRKVIEVSGIDPTTAQLAEHSFAEQVLAPTKIYVKPVLQLIKHTDVHAICHLTGGGFWENIPRVLPSSVKAVINEKSWEWHPIFKWLQEQGNIDRYEMYRTFNCGVGMIIALPQEDVETALALLQQVGEKAWVIGKIEHANADEEKVVIC.

It belongs to the AIR synthase family.

The protein localises to the cytoplasm. The enzyme catalyses 2-formamido-N(1)-(5-O-phospho-beta-D-ribosyl)acetamidine + ATP = 5-amino-1-(5-phospho-beta-D-ribosyl)imidazole + ADP + phosphate + H(+). It participates in purine metabolism; IMP biosynthesis via de novo pathway; 5-amino-1-(5-phospho-D-ribosyl)imidazole from N(2)-formyl-N(1)-(5-phospho-D-ribosyl)glycinamide: step 2/2. This Histophilus somni (strain 2336) (Haemophilus somnus) protein is Phosphoribosylformylglycinamidine cyclo-ligase.